The primary structure comprises 273 residues: Serine acetyltransferase (273 aa).

It belongs to the transferase hexapeptide repeat family. In terms of assembly, homohexamer. Dimer of a homotrimer.

The protein localises to the cytoplasm. It catalyses the reaction L-serine + acetyl-CoA = O-acetyl-L-serine + CoA. Its pathway is amino-acid biosynthesis; L-cysteine biosynthesis; L-cysteine from L-serine: step 1/2. This Shigella flexneri protein is Serine acetyltransferase (cysE).